A 2648-amino-acid chain; its full sequence is E3 ubiquitin-protein ligase hecd-1 (2648 aa).

2 ANK repeats span residues 374 to 403 (VGQS…DVNK) and 405 to 434 (HKSS…NPDL). Positions 433–455 (DLRDEDGKTALDKARERSDDDHN) are enriched in basic and acidic residues. 3 disordered regions span residues 433 to 494 (DLRD…ELPN), 645 to 714 (PMEI…KATA), and 1376 to 1400 (DPPK…ALPP). Composition is skewed to polar residues over residues 478–489 (ASTSKQPGTSTK), 652–661 (NQPSSSTAVP), and 670–688 (TVPS…NPST). Low complexity-rich tracts occupy residues 696–714 (SSTP…KATA) and 1383–1400 (PAGT…ALPP). The region spanning 1438 to 1510 (RSRGSYKISE…NFDIERVTST (73 aa)) is the MIB/HERC2 domain. Disordered regions lie at residues 1538 to 1562 (YTPK…GSSR), 1575 to 1629 (KNTT…SLQH), 1652 to 1796 (NQEP…LLGG), and 1811 to 1836 (ESLS…GKKP). 2 stretches are compositionally biased toward low complexity: residues 1543 to 1562 (TGGP…GSSR) and 1575 to 1586 (KNTTPAGTPSSG). The span at 1610–1629 (TSGPSVASTGQAASAESLQH) shows a compositional bias: polar residues. Acidic residues predominate over residues 1653–1666 (QEPEDEPMGGEESD). Residues 1667–1696 (SAASMRSAASSNSQMSMGSSSQQQQQQDSD) show a composition bias toward low complexity. Acidic residues-rich tracts occupy residues 1736–1746 (TDGDADADETN) and 1756–1783 (DAME…DESS). The span at 1812–1823 (SLSDASSSAKDA) shows a compositional bias: low complexity. The HECT domain occupies 2240–2648 (FHADRKAVLE…AINEKGFHLN (409 aa)). The Glycyl thioester intermediate role is filled by cysteine 2617.

The protein belongs to the UPL family. K-HECT subfamily. Expressed in most tissues, including hypodermis, muscle, intestine, vulva, and neurons.

The enzyme catalyses S-ubiquitinyl-[E2 ubiquitin-conjugating enzyme]-L-cysteine + [acceptor protein]-L-lysine = [E2 ubiquitin-conjugating enzyme]-L-cysteine + N(6)-ubiquitinyl-[acceptor protein]-L-lysine.. It functions in the pathway protein modification; protein ubiquitination. In terms of biological role, E3 ubiquitin-protein ligase which accepts ubiquitin from an E2 ubiquitin-conjugating enzyme in the form of a thioester and then directly transfers the ubiquitin to targeted substrates. Involved in the ubiquitination and proteasomal-mediated degradation of cytoplasmic and mitochondrial proteins. Positively regulates lin-12 activity in the anchor cell (AC)/vulval precursor (VU) cell fate decision. Negatively regulates glp-1 activity in germline proliferation. May play a role in the formation of fibrous organelles, a hemidesmosome-like structure attaching muscles to the epidermis. Regulates germline DNA double-strand-break repair and apoptosis in response to DNA damage by recruiting E4 ubiquitin-protein ligase ufd-2 to DNA repair foci. The chain is E3 ubiquitin-protein ligase hecd-1 from Caenorhabditis elegans.